The chain runs to 467 residues: Glutamate--tRNA ligase (467 aa).

Residues 9–19 carry the 'HIGH' region motif; that stretch reads PSPTGNLHIGS. The 'KMSKS' region motif lies at 237–241; it reads KISKR. An ATP-binding site is contributed by Lys240.

This sequence belongs to the class-I aminoacyl-tRNA synthetase family. Glutamate--tRNA ligase type 1 subfamily. Monomer.

Its subcellular location is the cytoplasm. The enzyme catalyses tRNA(Glu) + L-glutamate + ATP = L-glutamyl-tRNA(Glu) + AMP + diphosphate. Catalyzes the attachment of glutamate to tRNA(Glu) in a two-step reaction: glutamate is first activated by ATP to form Glu-AMP and then transferred to the acceptor end of tRNA(Glu). The sequence is that of Glutamate--tRNA ligase from Buchnera aphidicola subsp. Acyrthosiphon pisum (strain APS) (Acyrthosiphon pisum symbiotic bacterium).